The chain runs to 443 residues: Histidinol dehydrogenase (443 aa).

Tyrosine 141, glutamine 203, and asparagine 226 together coordinate NAD(+). Serine 249, glutamine 271, and histidine 274 together coordinate substrate. Glutamine 271 and histidine 274 together coordinate Zn(2+). Catalysis depends on proton acceptor residues glutamate 339 and histidine 340. Substrate-binding residues include histidine 340, aspartate 373, glutamate 427, and histidine 432. Aspartate 373 is a Zn(2+) binding site. Histidine 432 contributes to the Zn(2+) binding site.

This sequence belongs to the histidinol dehydrogenase family. Zn(2+) is required as a cofactor.

The enzyme catalyses L-histidinol + 2 NAD(+) + H2O = L-histidine + 2 NADH + 3 H(+). The protein operates within amino-acid biosynthesis; L-histidine biosynthesis; L-histidine from 5-phospho-alpha-D-ribose 1-diphosphate: step 9/9. Functionally, catalyzes the sequential NAD-dependent oxidations of L-histidinol to L-histidinaldehyde and then to L-histidine. The protein is Histidinol dehydrogenase of Chlorobium luteolum (strain DSM 273 / BCRC 81028 / 2530) (Pelodictyon luteolum).